The primary structure comprises 1038 residues: Inner tegument protein (1038 aa).

Residues 545 to 1038 form an interaction with large tegument protein region; the sequence is WGITPPVDVG…VPGNTSGSDP (494 aa).

This sequence belongs to the herpesviridae inner tegument protein family. As to quaternary structure, interacts (via C-terminus) with the large tegument protein/LTP (via N-terminus).

The protein localises to the virion tegument. The protein resides in the host cytoplasm. It localises to the host nucleus. It is found in the host Golgi apparatus. Its subcellular location is the host trans-Golgi network. Functionally, plays an essential role in cytoplasmic secondary envelopment during viral egress. Interacts with the capsid via the large tegument protein/LTP and participates in its transport to the host trans-Golgi network (TGN) where secondary envelopment occurs. Modulates tegumentation and capsid accumulation at the viral assembly complex. This chain is Inner tegument protein (21), found in Homo sapiens (Human).